The primary structure comprises 390 residues: GLH-binding kinase 1 (390 aa).

The Protein kinase domain occupies 38–338 (YVNLSFLNAG…VEDALNHPYV (301 aa)). ATP-binding positions include 44–52 (LNAGAQGTV) and Lys67. Residue Asp164 is the Proton acceptor of the active site. Residue Ser198 is modified to Phosphoserine. At Tyr200 the chain carries Phosphotyrosine.

This sequence belongs to the protein kinase superfamily. CMGC Ser/Thr protein kinase family. MAP kinase subfamily. As to quaternary structure, interacts with glh-1, glh-2 (via C-terminus), glh-3 (via C-terminus) and glh-4 (via C-terminus). Interacts with csn-5; the interaction may prevent glh-1 degradation induced by kgb-1. Interacts with fos-1. It depends on Mg(2+) as a cofactor. Post-translationally, may be phosphorylated by mek-1 on Ser-198 and/or Tyr-200. Phosphorylation is induced upon Cu(2+) and arsenite-mediated cell stimulation and by fasting. As to expression, expressed in somatic and germline tissues.

The protein localises to the cytoplasm. The catalysed reaction is L-seryl-[protein] + ATP = O-phospho-L-seryl-[protein] + ADP + H(+). It carries out the reaction L-threonyl-[protein] + ATP = O-phospho-L-threonyl-[protein] + ADP + H(+). With respect to regulation, activated by mek-1 mediated phosphorylation. No differences in basal activation between larvae and adults. Inhibited by phosphatase vhp-1. In terms of biological role, mitogen-activated protein kinase which is an essential component of the JNK pathway composed of mlk-1, mek-1 and kgb-1. Phosphorylates the transcription factor fos-1 which prevents fos-1 dimerization and promoter binding and results in activation of target genes including F53A9.2/kreg-1 and lys-3/kreg-2. Phosphorylates jun-1 and activates the AP-1 transcription factor which is a heterodimer of jun-1 and fos-1. Phosphorylates glh-1 in vitro which may play a role in controlling glh-1 protein levels in the germline by targeting it for degradation by the proteasome. Required for oogenesis and probably also for spermatogenesis. Involved in the response to environmental stress such as heavy metals, infection and protein folding stress in an age-dependent manner. In larvae, has a protective role which becomes detrimental in adults. May control susceptibility to infection, heavy metal stress and premature lethality by regulating daf-16 cellular localization. Involved in the transcriptional response to bacterial pore-forming toxins and to fasting. Required for fasting-induced longevity. Involved in axon regeneration after injury downstream of tyrosine receptor svh-2. This Caenorhabditis elegans protein is GLH-binding kinase 1.